The chain runs to 275 residues: Large ribosomal subunit protein uL2c (275 aa).

Residues 225-259 are disordered; sequence KNPVDHPHGGGEGRAPIGRSTPVTPWGKPALGRRT.

Belongs to the universal ribosomal protein uL2 family. As to quaternary structure, part of the 50S ribosomal subunit.

Its subcellular location is the plastid. It localises to the cyanelle. The sequence is that of Large ribosomal subunit protein uL2c (rpl2) from Cyanophora paradoxa.